Consider the following 2055-residue polypeptide: Citron rho-interacting kinase (2055 aa).

A Protein kinase domain is found at 97 to 359; the sequence is FEVRSLVGCG…FEGLCCHPFF (263 aa). Residues 103-111 and Lys-126 contribute to the ATP site; that span reads VGCGHFAEV. Asp-221 (proton acceptor) is an active-site residue. Positions 360–430 constitute an AGC-kinase C-terminal domain; sequence ARTDWNNIRN…SKALGYLGRS (71 aa). Positions 375–398 are disordered; sequence VPTLKSDDDTSNFDEPEKNSWVSS. Coiled coils occupy residues 457–747, 773–1238, and 1284–1318; these read LQDS…AQVS, IKKD…LEYQ, and YNEL…AREE. The disordered stretch occupies residues 1349-1376; it reads PEHQPSAMSLLAPPSSRRKEASTPEEFS. The span at 1353–1363 shows a compositional bias: low complexity; the sequence is PSAMSLLAPPS. Positions 1365-1376 are enriched in basic and acidic residues; it reads RRKEASTPEEFS. A Phorbol-ester/DAG-type zinc finger spans residues 1388 to 1437; sequence PHRFNVGLNMRATKCAVCLDTVHFGRQASKCLECQVMCHPKCSTCLPATC. The PH domain occupies 1469–1589; it reads SLHLEGWMKV…WVTALESVVA (121 aa). The CNH domain maps to 1617-1907; the sequence is RLDMNCTLPF…RYLGPAISSG (291 aa). A disordered region spans residues 1932–2040; the sequence is SGTEQHRVPS…RGRLPAGAVR (109 aa). Positions 1939–1948 are enriched in polar residues; it reads VPSTSRSSPN. A compositionally biased stretch (basic and acidic residues) spans 1974–2031; the sequence is SHPREPSTPHRYRDREGRTELRRDKSPGRPLEREKSPGRMLSTRRERSPGRLFEDSSR.

The protein belongs to the protein kinase superfamily. AGC Ser/Thr protein kinase family. Homodimer. Directly interacts with KIF14 depending on the activation state (stronger interaction with the kinase-dead form). Interacts with TTC3.

The protein localises to the cytoplasm. It catalyses the reaction L-seryl-[protein] + ATP = O-phospho-L-seryl-[protein] + ADP + H(+). The enzyme catalyses L-threonyl-[protein] + ATP = O-phospho-L-threonyl-[protein] + ADP + H(+). Plays a role in cytokinesis. Required for KIF14 localization to the central spindle and midbody. Putative RHO/RAC effector that binds to the GTP-bound forms of RHO and RAC1. It probably binds p21 with a tighter specificity in vivo. Displays serine/threonine protein kinase activity. Plays an important role in the regulation of cytokinesis and the development of the central nervous system. Phosphorylates MYL9/MLC2. This is Citron rho-interacting kinase from Rattus norvegicus (Rat).